Reading from the N-terminus, the 228-residue chain is 2,3-bisphosphoglycerate-dependent phosphoglycerate mutase (228 aa).

Substrate is bound by residues 8 to 15, 21 to 22, Arg60, 87 to 90, Lys98, 114 to 115, and 183 to 184; these read RHGQSVWN, TG, ERHY, RR, and GN. Residue His9 is the Tele-phosphohistidine intermediate of the active site. The Proton donor/acceptor role is filled by Glu87.

It belongs to the phosphoglycerate mutase family. BPG-dependent PGAM subfamily.

It carries out the reaction (2R)-2-phosphoglycerate = (2R)-3-phosphoglycerate. It participates in carbohydrate degradation; glycolysis; pyruvate from D-glyceraldehyde 3-phosphate: step 3/5. Its function is as follows. Catalyzes the interconversion of 2-phosphoglycerate and 3-phosphoglycerate. In Staphylococcus saprophyticus subsp. saprophyticus (strain ATCC 15305 / DSM 20229 / NCIMB 8711 / NCTC 7292 / S-41), this protein is 2,3-bisphosphoglycerate-dependent phosphoglycerate mutase.